Here is a 530-residue protein sequence, read N- to C-terminus: MSGKWISALLLLQISFCFKSGNCGKVLVWPMEYSHWMNIKIILEELVQKGHEVTVLRPSAFVFLDPKETSDLKFVTFPTSFSSHDLENFFTRFVNVWTYELPRDTCLSYFLYLQDTIDEYSDYCLTVCKEAVSNKQFMTKLQESKFDVVFSDAIGPCGELIAELLQIPFLYSLRFSPGYTIEQYIGGVLFPPSYVPMIFSGLAGQMTFIERVHNMICMLYFDFWFQTFREKKWDPFYSKTLGRPTTLAEIMGKAEMWLIRSYWDLEFPHPISPNVDYIGGLHCKPAKPLPKDIEDFVQSSGEHGVVVFSLGSMVRNMTEEKANIIAWALAQIPQKVLWRFDGKKPPTLGPNTRLYKWLPQNDLLGHPKTKAFVTHGGANGIYEAIHHGIPMIGIPLFAEQHDNIAHMVAKGAAVEVNFRTMSKSDLLNALEEVIDNPFYKKNAMWLSTIHHDQPTKPLDRAVFWIEFVMRHKGAKHLRSLGHNLPWYQYHSLDVIGFLLSCVAVTVVLALKCFLFVYRFFVKKEKKTKNE.

Residues 1 to 23 (MSGKWISALLLLQISFCFKSGNC) form the signal peptide. N-linked (GlcNAc...) asparagine glycosylation is present at Asn-316. Residues 494–510 (VIGFLLSCVAVTVVLAL) form a helical membrane-spanning segment.

Belongs to the UDP-glycosyltransferase family. N-glycosylated. As to expression, liver. Lower levels seen in the kidney and testis.

The protein resides in the endoplasmic reticulum membrane. The catalysed reaction is glucuronate acceptor + UDP-alpha-D-glucuronate = acceptor beta-D-glucuronoside + UDP + H(+). It catalyses the reaction 17alpha-estradiol + UDP-alpha-D-glucuronate = 17alpha-estradiol 3-O-(beta-D-glucuronate) + UDP + H(+). It carries out the reaction 16alpha,17alpha-estriol + UDP-alpha-D-glucuronate = 16alpha,17alpha-estriol 3-O-(beta-D-glucuronate) + UDP + H(+). The enzyme catalyses 17beta-hydroxy-5alpha-androstan-3-one + UDP-alpha-D-glucuronate = 5alpha-dihydrotestosterone 17-O-(beta-D-glucuronate) + UDP + H(+). Its function is as follows. UDP-glucuronosyltransferase (UGT) that catalyzes phase II biotransformation reactions in which lipophilic substrates are conjugated with glucuronic acid to increase the metabolite's water solubility, thereby facilitating excretion into either the urine or bile. Essential for the elimination and detoxification of drugs, xenobiotics and endogenous compounds. Catalyzes the glucuronidation of endogenous steroid hormones such as androgens (testosterone, androsterone) and estrogens (estradiol, epiestradiol, estriol, catechol estrogens). Displays glucuronidation activity toward several classes of xenoblotic substrates, including phenolic compounds (eugenol, 4-nitrophenol, 4-hydroxybiphenyl) and phenylpropanoids (naringenin, coumarins). Catalyzes the glucuronidation of monoterpenoid alcohols such as borneol, menthol and isomenthol, a class of natural compounds used in essential oils. The sequence is that of UDP-glucuronosyltransferase 2B15 from Rattus norvegicus (Rat).